A 202-amino-acid chain; its full sequence is Small ribosomal subunit protein uS4c (202 aa).

Residues 1–13 are compositionally biased toward basic residues; sequence MSRYRGPRMKMIR. Residues 1-41 are disordered; that stretch reads MSRYRGPRMKMIRRPGTLPGLTSKTPGTKVGSSDRSTSSKK. Over residues 29 to 41 the composition is skewed to low complexity; sequence KVGSSDRSTSSKK. An S4 RNA-binding domain is found at 90 to 153; sequence MRLDNTIFRL…KCRLVDRRDM (64 aa).

It belongs to the universal ribosomal protein uS4 family. Part of the 30S ribosomal subunit. Contacts protein S5. The interaction surface between S4 and S5 is involved in control of translational fidelity.

The protein localises to the plastid. Its function is as follows. One of the primary rRNA binding proteins, it binds directly to 16S rRNA where it nucleates assembly of the body of the 30S subunit. With S5 and S12 plays an important role in translational accuracy. The chain is Small ribosomal subunit protein uS4c (rps4) from Aneura mirabilis (Parasitic liverwort).